The sequence spans 225 residues: 3-dehydroquinate dehydratase (225 aa).

3-dehydroquinate-binding positions include 30-32 and Arg-62; that span reads EWR. The Proton donor/acceptor role is filled by His-118. Lys-143 (schiff-base intermediate with substrate) is an active-site residue. The 3-dehydroquinate site is built by Arg-186, Ser-205, and Gln-209.

The protein belongs to the type-I 3-dehydroquinase family. In terms of assembly, homodimer.

It carries out the reaction 3-dehydroquinate = 3-dehydroshikimate + H2O. Its pathway is metabolic intermediate biosynthesis; chorismate biosynthesis; chorismate from D-erythrose 4-phosphate and phosphoenolpyruvate: step 3/7. In terms of biological role, involved in the third step of the chorismate pathway, which leads to the biosynthesis of aromatic amino acids. Catalyzes the cis-dehydration of 3-dehydroquinate (DHQ) and introduces the first double bond of the aromatic ring to yield 3-dehydroshikimate. This chain is 3-dehydroquinate dehydratase, found in Streptococcus thermophilus (strain ATCC BAA-491 / LMD-9).